The chain runs to 83 residues: Cell division topological specificity factor (83 aa).

The protein belongs to the MinE family.

Its function is as follows. Prevents the cell division inhibition by proteins MinC and MinD at internal division sites while permitting inhibition at polar sites. This ensures cell division at the proper site by restricting the formation of a division septum at the midpoint of the long axis of the cell. This is Cell division topological specificity factor from Buchnera aphidicola subsp. Acyrthosiphon pisum (strain 5A).